The chain runs to 263 residues: Endonuclease 8 (263 aa).

Proline 2 acts as the Schiff-base intermediate with DNA in catalysis. Glutamate 3 (proton donor) is an active-site residue. Lysine 53 acts as the Proton donor; for beta-elimination activity in catalysis. DNA is bound by residues glutamine 70, arginine 125, and asparagine 169. The FPG-type zinc finger occupies lysine 229 to lysine 263. Arginine 253 functions as the Proton donor; for delta-elimination activity in the catalytic mechanism.

The protein belongs to the FPG family. Zn(2+) serves as cofactor.

It catalyses the reaction 2'-deoxyribonucleotide-(2'-deoxyribose 5'-phosphate)-2'-deoxyribonucleotide-DNA = a 3'-end 2'-deoxyribonucleotide-(2,3-dehydro-2,3-deoxyribose 5'-phosphate)-DNA + a 5'-end 5'-phospho-2'-deoxyribonucleoside-DNA + H(+). In terms of biological role, involved in base excision repair of DNA damaged by oxidation or by mutagenic agents. Acts as a DNA glycosylase that recognizes and removes damaged bases. Has a preference for oxidized pyrimidines, such as thymine glycol, 5,6-dihydrouracil and 5,6-dihydrothymine. Has AP (apurinic/apyrimidinic) lyase activity and introduces nicks in the DNA strand. Cleaves the DNA backbone by beta-delta elimination to generate a single-strand break at the site of the removed base with both 3'- and 5'-phosphates. The protein is Endonuclease 8 of Salmonella arizonae (strain ATCC BAA-731 / CDC346-86 / RSK2980).